Reading from the N-terminus, the 134-residue chain is Cell division protein SepF 1 (134 aa).

It belongs to the SepF family. As to quaternary structure, homodimer. Interacts with FtsZ.

It is found in the cytoplasm. In terms of biological role, cell division protein that is part of the divisome complex and is recruited early to the Z-ring. Probably stimulates Z-ring formation, perhaps through the cross-linking of FtsZ protofilaments. Its function overlaps with FtsA. This Streptomyces avermitilis (strain ATCC 31267 / DSM 46492 / JCM 5070 / NBRC 14893 / NCIMB 12804 / NRRL 8165 / MA-4680) protein is Cell division protein SepF 1.